The primary structure comprises 701 residues: DNA ligase (701 aa).

NAD(+) is bound by residues 43 to 47 (DADYD), 92 to 93 (SL), and Glu-126. Residue Lys-128 is the N6-AMP-lysine intermediate of the active site. NAD(+) contacts are provided by Arg-149, Glu-186, Lys-302, and Lys-326. The Zn(2+) site is built by Cys-417, Cys-420, Cys-440, and Cys-446. The 80-residue stretch at 622–701 (ETGSPVTGKT…DEWLALIGET (80 aa)) folds into the BRCT domain.

This sequence belongs to the NAD-dependent DNA ligase family. LigA subfamily. Requires Mg(2+) as cofactor. Mn(2+) is required as a cofactor.

The catalysed reaction is NAD(+) + (deoxyribonucleotide)n-3'-hydroxyl + 5'-phospho-(deoxyribonucleotide)m = (deoxyribonucleotide)n+m + AMP + beta-nicotinamide D-nucleotide.. Functionally, DNA ligase that catalyzes the formation of phosphodiester linkages between 5'-phosphoryl and 3'-hydroxyl groups in double-stranded DNA using NAD as a coenzyme and as the energy source for the reaction. It is essential for DNA replication and repair of damaged DNA. The polypeptide is DNA ligase (Hyphomonas neptunium (strain ATCC 15444)).